The following is a 159-amino-acid chain: Photosystem I reaction center subunit XI (159 aa).

The next 3 helical transmembrane spans lie at 53–73 (LEIG…LGPL), 84–104 (LISG…YGIV), and 125–145 (FTAG…TLLE).

This sequence belongs to the PsaL family.

The protein resides in the cellular thylakoid membrane. This is Photosystem I reaction center subunit XI from Cyanothece sp. (strain PCC 7425 / ATCC 29141).